The primary structure comprises 771 residues: Leucine-rich repeat and fibronectin type III domain-containing protein 1 (771 aa).

The N-terminal stretch at 1-31 (MAPGPFSSALLSPPPAALPFLLLLWAGASRG) is a signal peptide. The 34-residue stretch at 32–65 (QPCPGRCICQNVAPTLTMLCAKTGLLFVPPAIDR) folds into the LRRNT domain. Over 32-536 (QPCPGRCICQ…LRAHFLGGTM (505 aa)) the chain is Extracellular. LRR repeat units follow at residues 66–87 (RVVELRLTDNFIAAVRRRDFAN), 90–111 (SLVHLTLSRNTIGQVAAGAFAD), 114–135 (ALRALHLDSNRLAEVRGDQLRG), 138–159 (NLRHLILGNNQIRRVESAAFDA), 163–184 (TVEDLDLSYNNLEALPWEAVGQ), 187–208 (NLNTLTLDHNLIDHIAEGTFVQ), and 211–232 (KLVRLDMTSNRLHKLPPDGLFL). An N-linked (GlcNAc...) asparagine glycan is attached at asparagine 87. Residues 252 to 298 (NPLHCNCELLWLRRLTREDDLETCATPEHLTDRYFWSIPEEEFLCEP) form the LRRCT domain. In terms of domain architecture, Ig-like spans 299–386 (PLITRQAGGR…GEATAPVEVC (88 aa)). A disulfide bridge connects residues cysteine 321 and cysteine 370. N-linked (GlcNAc...) asparagine glycosylation is present at asparagine 343. A disordered region spans residues 397–422 (PAAPPPLTEPGSSDIATPGRPGANDS). The 97-residue stretch at 424–520 (AERRLVAAEL…GCVQFTTAGD (97 aa)) folds into the Fibronectin type-III domain. Residues 537–557 (IIAIGGVIVASVLVFIVLLMI) form a helical membrane-spanning segment. Residues 558-771 (RYKVYGDGDS…STEWMLESTV (214 aa)) lie on the Cytoplasmic side of the membrane. 2 positions are modified to phosphoserine: serine 613 and serine 718. A disordered region spans residues 654–743 (PSEETSGEES…HLDGAGGGAA (90 aa)). Over residues 719–732 (YPRRARRTKRHRST) the composition is skewed to basic residues. Residues 768–771 (ESTV) carry the PDZ-binding motif.

It belongs to the LRFN family. Can form heteromeric complexes with LRFN2, LRFN3, LRFN4 and LRFN5. Forms homomeric complexes, but not across cell junctions. Interacts with DLG1, DLG2, DLG3 and DLG4. Interacts with 2 AMPA receptor subunits GRIA1 and GRIA2 and NMDA receptor subunit GRIN1. In terms of processing, glycosylated.

Its subcellular location is the membrane. It localises to the synapse. It is found in the postsynaptic density membrane. Its function is as follows. Promotes neurite outgrowth in hippocampal neurons. Involved in the regulation and maintenance of excitatory synapses. Induces the clustering of excitatory postsynaptic proteins, including DLG4, DLGAP1, GRIA1 and GRIN1. This is Leucine-rich repeat and fibronectin type III domain-containing protein 1 (LRFN1) from Homo sapiens (Human).